The following is a 131-amino-acid chain: Fumarate reductase subunit C (131 aa).

3 helical membrane-spanning segments follow: residues 30–50, 57–77, and 109–129; these read EGTA…LFAL, WAGF…LITL, and IIKS…FVAL.

The protein belongs to the FrdC family. As to quaternary structure, part of an enzyme complex containing four subunits: a flavoprotein (FrdA), an iron-sulfur protein (FrdB), and two hydrophobic anchor proteins (FrdC and FrdD).

The protein resides in the cell inner membrane. Its function is as follows. Two distinct, membrane-bound, FAD-containing enzymes are responsible for the catalysis of fumarate and succinate interconversion; fumarate reductase is used in anaerobic growth, and succinate dehydrogenase is used in aerobic growth. Anchors the catalytic components of the fumarate reductase complex to the cell inner membrane, binds quinones. This chain is Fumarate reductase subunit C, found in Shigella flexneri.